A 542-amino-acid chain; its full sequence is Calcium/calmodulin-dependent protein kinase type II subunit beta (542 aa).

The Protein kinase domain maps to 14–272; sequence YQLYEDIGKG…AHEALKHPWV (259 aa). Y17 carries the post-translational modification Phosphotyrosine. ATP-binding positions include 20–28 and K43; that span reads IGKGAFSVV. The active-site Proton acceptor is the D136. Residues 283-292 are autoinhibitory domain; the sequence is HRQETVECLK. Residue T287 is modified to Phosphothreonine; by autocatalysis. The tract at residues 291–301 is calmodulin-binding; sequence LKKFNARRKLK. A phosphothreonine; by autocatalysis mark is found at T306 and T307. The interval 349-407 is disordered; it reads ADGVKPQTNSTKNSAAATSPKGTLPPAALEPQTTVIHNPVDGIKESSDSTHTTIEDEDT. Over residues 354–369 the composition is skewed to polar residues; it reads PQTNSTKNSAAATSPK. 3 positions are modified to phosphoserine: S367, S394, and S397. 2 positions are modified to phosphothreonine: T400 and T401.

The protein belongs to the protein kinase superfamily. CAMK Ser/Thr protein kinase family. CaMK subfamily. In terms of assembly, CAMK2 is composed of 4 different chains: alpha (CAMK2A), beta (CAMK2B), gamma (CAMK2G), and delta (CAMK2D). The different isoforms assemble into homo- or heteromultimeric holoenzymes composed of 12 subunits with two hexameric rings stacked one on top of the other. Interacts with SYNGAP1, CAMK2N2 and MPDZ. Interacts with FOXO3. Interacts (when in a kinase inactive state not associated with calmodulin) with ARC; leading to target ARC to inactive synapses. Interacts with CAMK2N1; this interaction requires CAMK2B activation by Ca(2+). Post-translationally, autophosphorylation of Thr-287 following activation by Ca(2+)/calmodulin. Phosphorylation of Thr-287 locks the kinase into an activated state.

Its subcellular location is the cytoplasm. It localises to the cytoskeleton. It is found in the microtubule organizing center. The protein localises to the centrosome. The protein resides in the sarcoplasmic reticulum membrane. Its subcellular location is the synapse. It catalyses the reaction L-seryl-[protein] + ATP = O-phospho-L-seryl-[protein] + ADP + H(+). The enzyme catalyses L-threonyl-[protein] + ATP = O-phospho-L-threonyl-[protein] + ADP + H(+). Activated by Ca(2+)/calmodulin. Binding of calmodulin results in conformational change that relieves intrasteric autoinhibition and allows autophosphorylation of Thr-287 which turns the kinase in a constitutively active form and confers to the kinase a Ca(2+)-independent activity. In terms of biological role, calcium/calmodulin-dependent protein kinase that functions autonomously after Ca(2+)/calmodulin-binding and autophosphorylation, and is involved in dendritic spine and synapse formation, neuronal plasticity and regulation of sarcoplasmic reticulum Ca(2+) transport in skeletal muscle. In neurons, plays an essential structural role in the reorganization of the actin cytoskeleton during plasticity by binding and bundling actin filaments in a kinase-independent manner. This structural function is required for correct targeting of CaMK2A, which acts downstream of NMDAR to promote dendritic spine and synapse formation and maintain synaptic plasticity which enables long-term potentiation (LTP) and hippocampus-dependent learning. In developing hippocampal neurons, promotes arborization of the dendritic tree and in mature neurons, promotes dendritic remodeling. Also regulates the migration of developing neurons. Participates in the modulation of skeletal muscle function in response to exercise. In slow-twitch muscles, is involved in regulation of sarcoplasmic reticulum (SR) Ca(2+) transport and in fast-twitch muscle participates in the control of Ca(2+) release from the SR through phosphorylation of triadin, a ryanodine receptor-coupling factor, and phospholamban (PLN/PLB), an endogenous inhibitor of SERCA2A/ATP2A2. In response to interferon-gamma (IFN-gamma) stimulation, catalyzes phosphorylation of STAT1, stimulating the JAK-STAT signaling pathway. Phosphorylates reticulophagy regulator RETREG1 at 'Ser-147' under endoplasmic reticulum stress conditions which enhances RETREG1 oligomerization and its membrane scission and reticulophagy activity. The sequence is that of Calcium/calmodulin-dependent protein kinase type II subunit beta (CAMK2B) from Bos taurus (Bovine).